Reading from the N-terminus, the 520-residue chain is 2,3-bisphosphoglycerate-independent phosphoglycerate mutase (520 aa).

Residues D13 and S63 each coordinate Mn(2+). The Phosphoserine intermediate role is filled by S63. Residues H124, 154–155 (RD), R192, R198, 268–271 (RADR), and K342 contribute to the substrate site. The Mn(2+) site is built by D409, H413, D450, H451, and H469.

This sequence belongs to the BPG-independent phosphoglycerate mutase family. In terms of assembly, monomer. It depends on Mn(2+) as a cofactor.

The enzyme catalyses (2R)-2-phosphoglycerate = (2R)-3-phosphoglycerate. It functions in the pathway carbohydrate degradation; glycolysis; pyruvate from D-glyceraldehyde 3-phosphate: step 3/5. Its function is as follows. Catalyzes the interconversion of 2-phosphoglycerate and 3-phosphoglycerate. In Colwellia psychrerythraea (strain 34H / ATCC BAA-681) (Vibrio psychroerythus), this protein is 2,3-bisphosphoglycerate-independent phosphoglycerate mutase.